The following is a 442-amino-acid chain: tRNA(Ile)-lysidine synthase (442 aa).

27–32 lines the ATP pocket; the sequence is SGGLDS.

The protein belongs to the tRNA(Ile)-lysidine synthase family.

It is found in the cytoplasm. The enzyme catalyses cytidine(34) in tRNA(Ile2) + L-lysine + ATP = lysidine(34) in tRNA(Ile2) + AMP + diphosphate + H(+). Functionally, ligates lysine onto the cytidine present at position 34 of the AUA codon-specific tRNA(Ile) that contains the anticodon CAU, in an ATP-dependent manner. Cytidine is converted to lysidine, thus changing the amino acid specificity of the tRNA from methionine to isoleucine. The chain is tRNA(Ile)-lysidine synthase from Photorhabdus laumondii subsp. laumondii (strain DSM 15139 / CIP 105565 / TT01) (Photorhabdus luminescens subsp. laumondii).